Here is a 449-residue protein sequence, read N- to C-terminus: Putative cytochrome P450 135A1 (449 aa).

Cys383 serves as a coordination point for heme.

It belongs to the cytochrome P450 family. Requires heme as cofactor.

The protein is Putative cytochrome P450 135A1 (cyp135A1) of Mycobacterium tuberculosis (strain CDC 1551 / Oshkosh).